Reading from the N-terminus, the 433-residue chain is MENRTYTADAEPGETVTVAGWVHEVRDLGGIAFLILRDTTGQIQVKFEKDEMDDELVETGLNVARESVITVSGDVEEEPRAPTGVEVTPETVEVLSEADTELPLDPTGKVDAELSTRLDNRTLDLRSEEGQAIFEIRAEVLRAVREAFRDANATEINTSKIVATGTEGGTELFPITYFGEEAFMNQSPQLFKQLVAGSNIERVFEIGPIFRAEEHNTPRHLNEATSIDFEGAFCDHTDAMDVCEQVVTAAYEAVAENCTDQLEALGITEEFEVPETPFPRLSYEEAIERINATGELDEQLVWGDDLPTEGEKALGDDVGGHYFITDWPAEIKPFYIMDHEDGELSTGFDMMHPRMELVSGGQREHRREELIAGFEQQGLEPEAFEYYTKMFKYGMPPHAGWGLGGERLLMTMLDLDNIREAVLFPRDRQRLSP.

Glutamate 167 serves as a coordination point for L-aspartate. Positions 189–192 are aspartate; that stretch reads QLFK. Arginine 211 serves as a coordination point for L-aspartate. ATP-binding positions include 211-213, 219-221, and glutamate 356; these read RAE and RHL. Positions 356 and 359 each coordinate Mg(2+). Residues serine 359 and arginine 363 each coordinate L-aspartate. 404–407 is a binding site for ATP; it reads GGER.

This sequence belongs to the class-II aminoacyl-tRNA synthetase family. Type 2 subfamily. As to quaternary structure, homodimer. Requires Mg(2+) as cofactor.

The protein localises to the cytoplasm. It catalyses the reaction tRNA(Asx) + L-aspartate + ATP = L-aspartyl-tRNA(Asx) + AMP + diphosphate. Functionally, aspartyl-tRNA synthetase with relaxed tRNA specificity since it is able to aspartylate not only its cognate tRNA(Asp) but also tRNA(Asn). Reaction proceeds in two steps: L-aspartate is first activated by ATP to form Asp-AMP and then transferred to the acceptor end of tRNA(Asp/Asn). This Natronomonas pharaonis (strain ATCC 35678 / DSM 2160 / CIP 103997 / JCM 8858 / NBRC 14720 / NCIMB 2260 / Gabara) (Halobacterium pharaonis) protein is Aspartate--tRNA(Asp/Asn) ligase.